We begin with the raw amino-acid sequence, 159 residues long: Lipoprotein signal peptidase (159 aa).

The next 2 helical transmembrane spans lie at 64 to 84 (SVQW…IWVV) and 89 to 109 (PPFW…GNGI). Residues aspartate 119 and aspartate 135 contribute to the active site. The helical transmembrane segment at 130–150 (IFNPADIAINLAVLCFLVDLW) threads the bilayer.

Belongs to the peptidase A8 family.

The protein localises to the cell inner membrane. The catalysed reaction is Release of signal peptides from bacterial membrane prolipoproteins. Hydrolyzes -Xaa-Yaa-Zaa-|-(S,diacylglyceryl)Cys-, in which Xaa is hydrophobic (preferably Leu), and Yaa (Ala or Ser) and Zaa (Gly or Ala) have small, neutral side chains.. It functions in the pathway protein modification; lipoprotein biosynthesis (signal peptide cleavage). Its function is as follows. This protein specifically catalyzes the removal of signal peptides from prolipoproteins. In Parasynechococcus marenigrum (strain WH8102), this protein is Lipoprotein signal peptidase.